Here is a 224-residue protein sequence, read N- to C-terminus: MTVAIIRFGGSNCDRDAERALAHLDIDAEIVWHEDGLPEETTGVMIPGGFSYGDYLRAGAMAARAPIMDDVREQAEAGVPVLGVCNGAQIGSEGDLTPGAFTTNRSARFQCEPVYLRVENAETPWTEAYEDGEVIEVPIAHGEGRFEIADDELETLVDEDRVIFRYCDADGNVTDAANPNGSKDNVAGVLGEHESVAVLMPHPERASLPDIGPTDGQGVLEGFR.

One can recognise a Glutamine amidotransferase type-1 domain in the interval 2–224; that stretch reads TVAIIRFGGS…DGQGVLEGFR (223 aa). Residue cysteine 85 is the Nucleophile of the active site. Catalysis depends on residues histidine 202 and glutamate 204. Residues 204–224 form a disordered region; the sequence is ERASLPDIGPTDGQGVLEGFR.

In terms of assembly, part of the FGAM synthase complex composed of 1 PurL, 1 PurQ and 2 PurS subunits.

It is found in the cytoplasm. The enzyme catalyses N(2)-formyl-N(1)-(5-phospho-beta-D-ribosyl)glycinamide + L-glutamine + ATP + H2O = 2-formamido-N(1)-(5-O-phospho-beta-D-ribosyl)acetamidine + L-glutamate + ADP + phosphate + H(+). It catalyses the reaction L-glutamine + H2O = L-glutamate + NH4(+). It functions in the pathway purine metabolism; IMP biosynthesis via de novo pathway; 5-amino-1-(5-phospho-D-ribosyl)imidazole from N(2)-formyl-N(1)-(5-phospho-D-ribosyl)glycinamide: step 1/2. In terms of biological role, part of the phosphoribosylformylglycinamidine synthase complex involved in the purines biosynthetic pathway. Catalyzes the ATP-dependent conversion of formylglycinamide ribonucleotide (FGAR) and glutamine to yield formylglycinamidine ribonucleotide (FGAM) and glutamate. The FGAM synthase complex is composed of three subunits. PurQ produces an ammonia molecule by converting glutamine to glutamate. PurL transfers the ammonia molecule to FGAR to form FGAM in an ATP-dependent manner. PurS interacts with PurQ and PurL and is thought to assist in the transfer of the ammonia molecule from PurQ to PurL. The protein is Phosphoribosylformylglycinamidine synthase subunit PurQ of Natronomonas pharaonis (strain ATCC 35678 / DSM 2160 / CIP 103997 / JCM 8858 / NBRC 14720 / NCIMB 2260 / Gabara) (Halobacterium pharaonis).